We begin with the raw amino-acid sequence, 402 residues long: LIM/homeobox protein Lhx5 (402 aa).

LIM zinc-binding domains lie at 3–61 (AHCA…RRFG) and 62–125 (TKCA…ASSL). Disordered stretches follow at residues 133-187 (VSSC…RTTI), 291-335 (NYDF…GHHP), and 365-392 (SGEV…LPHQ). Positions 151 to 167 (DESKETDHSTSSDKETA) are enriched in basic and acidic residues. The homeobox DNA-binding region spans 180–239 (RRGPRTTIKAKQLETLKAAFIATPKPTRHIREQLAQETGLNMRVIQVWFQNRRSKERRMK). Over residues 300-319 (PSSQTQSPADSSYLQNSGPG) the composition is skewed to polar residues.

Interacts with ldb1 and with the N-terminus of rnf12.

The protein resides in the nucleus. Functionally, probably involved in the patterning of the nervous system, in particular in the early specification of the diencephalon. The sequence is that of LIM/homeobox protein Lhx5 (lhx5) from Xenopus laevis (African clawed frog).